The following is a 213-amino-acid chain: Protein-L-isoaspartate O-methyltransferase (213 aa).

Ser-64 is a catalytic residue.

This sequence belongs to the methyltransferase superfamily. L-isoaspartyl/D-aspartyl protein methyltransferase family.

The protein resides in the cytoplasm. The catalysed reaction is [protein]-L-isoaspartate + S-adenosyl-L-methionine = [protein]-L-isoaspartate alpha-methyl ester + S-adenosyl-L-homocysteine. Functionally, catalyzes the methyl esterification of L-isoaspartyl residues in peptides and proteins that result from spontaneous decomposition of normal L-aspartyl and L-asparaginyl residues. It plays a role in the repair and/or degradation of damaged proteins. In Christiangramia forsetii (strain DSM 17595 / CGMCC 1.15422 / KT0803) (Gramella forsetii), this protein is Protein-L-isoaspartate O-methyltransferase.